Consider the following 201-residue polypeptide: Ribonuclease HII (201 aa).

Residues 11-201 (LRECGCDEAG…VVDADRPTTE (191 aa)) form the RNase H type-2 domain. A divalent metal cation-binding residues include Asp17, Glu18, and Asp109.

This sequence belongs to the RNase HII family. It depends on Mn(2+) as a cofactor. Mg(2+) serves as cofactor.

The protein localises to the cytoplasm. It catalyses the reaction Endonucleolytic cleavage to 5'-phosphomonoester.. Functionally, endonuclease that specifically degrades the RNA of RNA-DNA hybrids. The protein is Ribonuclease HII (rnhB) of Porphyromonas gingivalis (strain ATCC BAA-308 / W83).